A 104-amino-acid chain; its full sequence is Pyrimidine/purine nucleoside phosphorylase (104 aa).

Belongs to the nucleoside phosphorylase PpnP family.

It catalyses the reaction a purine D-ribonucleoside + phosphate = a purine nucleobase + alpha-D-ribose 1-phosphate. The catalysed reaction is adenosine + phosphate = alpha-D-ribose 1-phosphate + adenine. The enzyme catalyses cytidine + phosphate = cytosine + alpha-D-ribose 1-phosphate. It carries out the reaction guanosine + phosphate = alpha-D-ribose 1-phosphate + guanine. It catalyses the reaction inosine + phosphate = alpha-D-ribose 1-phosphate + hypoxanthine. The catalysed reaction is thymidine + phosphate = 2-deoxy-alpha-D-ribose 1-phosphate + thymine. The enzyme catalyses uridine + phosphate = alpha-D-ribose 1-phosphate + uracil. It carries out the reaction xanthosine + phosphate = alpha-D-ribose 1-phosphate + xanthine. Functionally, catalyzes the phosphorolysis of diverse nucleosides, yielding D-ribose 1-phosphate and the respective free bases. Can use uridine, adenosine, guanosine, cytidine, thymidine, inosine and xanthosine as substrates. Also catalyzes the reverse reactions. In Hydrogenovibrio crunogenus (strain DSM 25203 / XCL-2) (Thiomicrospira crunogena), this protein is Pyrimidine/purine nucleoside phosphorylase.